We begin with the raw amino-acid sequence, 190 residues long: MAILPEFISQTPPVTRYIVLGTLFTTLAVNFGYVSDLKIFFNWKLFLAKGEYWRAITTFLYVGPFGLELILYLSFLLRFMSMLERSSPPPQTQSFLKTVLIVWFSLLVTSYFSYMPFAASYFSFTMLYIWSWKHPLYRISILGLFDVKAPYVPWVMVLLRWLRTGIFPLLDLISALIGHVYFFVTDFSTV.

At 1–16 (MAILPEFISQTPPVTR) the chain is on the cytoplasmic side. A helical membrane pass occupies residues 17 to 37 (YIVLGTLFTTLAVNFGYVSDL). Residues 38 to 55 (KIFFNWKLFLAKGEYWRA) lie on the Lumenal side of the membrane. A helical transmembrane segment spans residues 56 to 76 (ITTFLYVGPFGLELILYLSFL). Residues 77-98 (LRFMSMLERSSPPPQTQSFLKT) are Cytoplasmic-facing. A helical membrane pass occupies residues 99-119 (VLIVWFSLLVTSYFSYMPFAA). Over 120–138 (SYFSFTMLYIWSWKHPLYR) the chain is Lumenal. Residues 139 to 159 (ISILGLFDVKAPYVPWVMVLL) form a helical membrane-spanning segment. The Cytoplasmic portion of the chain corresponds to 160–163 (RWLR). Residues 164 to 184 (TGIFPLLDLISALIGHVYFFV) traverse the membrane as a helical segment. Over 185-190 (TDFSTV) the chain is Lumenal.

This sequence belongs to the derlin family.

Its subcellular location is the endoplasmic reticulum membrane. This is an uncharacterized protein from Schizosaccharomyces pombe (strain 972 / ATCC 24843) (Fission yeast).